Consider the following 337-residue polypeptide: MNDLPPIANLISNILFVLLIITFLYALCSRFVSDKTLYDYTILPTNDPEKINYYIEPSPSPKEKIPFPTVFSPSEVYTTFVVPAYNESKRITPMLDETVAYLERRASENPEFTWEIIVVNDGSKDNTAEIVTNYAFKHPQIRLLNQPKNMGKGAAVQAGCLHSRGELILMVDADGATKIDEFEELEKKIKSLTTINKEAIVVGSRAHLEGAEKANRTPLRKFLGLGFHMLITIAGVHGIKDTQCGFKLFTREAARWLFPNQHVQRWCFDPELLVIAQSRQMEVAEVPVEWNEIGDSKMKISGMIKMAIDLVQIAIYFRAGLWTVKDKADTPISDFEV.

The Lumenal portion of the chain corresponds to 1–6 (MNDLPP). The chain crosses the membrane as a helical span at residues 7-27 (IANLISNILFVLLIITFLYAL). Over 28-337 (CSRFVSDKTL…ADTPISDFEV (310 aa)) the chain is Cytoplasmic.

It belongs to the glycosyltransferase 2 family.

It localises to the endoplasmic reticulum membrane. It catalyses the reaction a di-trans,poly-cis-dolichyl phosphate + UDP-alpha-D-glucose = a di-trans,poly-cis-dolichyl beta-D-glucosyl phosphate + UDP. It functions in the pathway protein modification; protein glycosylation. In terms of biological role, dolichyl-phosphate beta-glucosyltransferase involved in the glycosylation of glycoproteins through the synthesis of dolichyl beta-D-glucosyl phosphate which serves as a sugar donor for transfer of three glucose residues to the Man-9-GlcNAc-2-PP-dolichol precursor to N-glycans. In Trichomonas vaginalis (strain ATCC PRA-98 / G3), this protein is Dolichyl-phosphate beta-glucosyltransferase ALG5C.